Here is a 192-residue protein sequence, read N- to C-terminus: dTTP/UTP pyrophosphatase (192 aa).

Asp70 (proton acceptor) is an active-site residue.

Belongs to the Maf family. YhdE subfamily. The cofactor is a divalent metal cation.

It is found in the cytoplasm. The enzyme catalyses dTTP + H2O = dTMP + diphosphate + H(+). It catalyses the reaction UTP + H2O = UMP + diphosphate + H(+). In terms of biological role, nucleoside triphosphate pyrophosphatase that hydrolyzes dTTP and UTP. May have a dual role in cell division arrest and in preventing the incorporation of modified nucleotides into cellular nucleic acids. The polypeptide is dTTP/UTP pyrophosphatase (Alkaliphilus metalliredigens (strain QYMF)).